A 54-amino-acid polypeptide reads, in one-letter code: MAVPKKRTSISKKRIRRNIWKKRGYWEAKRAFSLAKSISSGRSKSFFVLQKNKQ.

This sequence belongs to the bacterial ribosomal protein bL32 family.

It localises to the plastid. Its subcellular location is the chloroplast. In Piper cenocladum (Ant piper), this protein is Large ribosomal subunit protein bL32c.